A 715-amino-acid polypeptide reads, in one-letter code: ABC transporter F family member 3 (715 aa).

N-acetylthreonine is present on threonine 2. Residues valine 96–proline 118 form a disordered region. ABC transporter domains follow at residues isoleucine 175–glutamine 436 and isoleucine 504–serine 713. ATP-binding positions include glycine 207–threonine 214 and glycine 537–serine 544.

The protein belongs to the ABC transporter superfamily. ABCF family. EF3 (TC 3.A.1.121) subfamily.

This Arabidopsis thaliana (Mouse-ear cress) protein is ABC transporter F family member 3 (ABCF3).